Reading from the N-terminus, the 45-residue chain is MELMLLFAKLPEAYSIFDPLVDVLPVIPVLFLALAFVWQASVGFR.

A propeptide spanning residues 1–8 (MELMLLFA) is cleaved from the precursor. A helical transmembrane segment spans residues 24–44 (LPVIPVLFLALAFVWQASVGF).

It belongs to the PsbK family. As to quaternary structure, PSII is composed of 1 copy each of membrane proteins PsbA, PsbB, PsbC, PsbD, PsbE, PsbF, PsbH, PsbI, PsbJ, PsbK, PsbL, PsbM, PsbT, PsbX, PsbY, PsbZ, Psb30/Ycf12, peripheral proteins PsbO, CyanoQ (PsbQ), PsbU, PsbV and a large number of cofactors. It forms dimeric complexes.

It is found in the cellular thylakoid membrane. In terms of biological role, one of the components of the core complex of photosystem II (PSII). PSII is a light-driven water:plastoquinone oxidoreductase that uses light energy to abstract electrons from H(2)O, generating O(2) and a proton gradient subsequently used for ATP formation. It consists of a core antenna complex that captures photons, and an electron transfer chain that converts photonic excitation into a charge separation. The polypeptide is Photosystem II reaction center protein K (Cyanothece sp. (strain PCC 7425 / ATCC 29141)).